The chain runs to 318 residues: Transaldolase (318 aa).

Residue K132 is the Schiff-base intermediate with substrate of the active site.

Belongs to the transaldolase family. Type 1 subfamily. In terms of assembly, homodimer.

The protein resides in the cytoplasm. It catalyses the reaction D-sedoheptulose 7-phosphate + D-glyceraldehyde 3-phosphate = D-erythrose 4-phosphate + beta-D-fructose 6-phosphate. Its pathway is carbohydrate degradation; pentose phosphate pathway; D-glyceraldehyde 3-phosphate and beta-D-fructose 6-phosphate from D-ribose 5-phosphate and D-xylulose 5-phosphate (non-oxidative stage): step 2/3. Functionally, transaldolase is important for the balance of metabolites in the pentose-phosphate pathway. In Shewanella piezotolerans (strain WP3 / JCM 13877), this protein is Transaldolase.